Consider the following 85-residue polypeptide: UPF0297 protein LBA0418 (85 aa).

It belongs to the UPF0297 family.

The polypeptide is UPF0297 protein LBA0418 (Lactobacillus acidophilus (strain ATCC 700396 / NCK56 / N2 / NCFM)).